Here is a 233-residue protein sequence, read N- to C-terminus: C-type lectin domain family 2 member D6 (233 aa).

Residues 1 to 45 (MPSSAHLQDSPPLLSRTLTQNEGQTSLRQSSSCGPSATSASESLS) are disordered. Over 1 to 73 (MPSSAHLQDS…GIILPESPAK (73 aa)) the chain is Cytoplasmic. Polar residues predominate over residues 16 to 29 (RTLTQNEGQTSLRQ). Over residues 30-43 (SSSCGPSATSASES) the composition is skewed to low complexity. A helical; Signal-anchor for type II membrane protein membrane pass occupies residues 74-94 (LLCCCAVIVVLSVAVVALSVA). Residues 95 to 233 (LSVKKTPQIS…KLNSYTSQCQ (139 aa)) lie on the Extracellular side of the membrane. In terms of domain architecture, C-type lectin spans 119 to 230 (VGNKCYYFNE…ICSKLNSYTS (112 aa)). N-linked (GlcNAc...) asparagine glycosylation occurs at N132.

The protein localises to the cell membrane. In terms of biological role, lectin-type cell surface receptor. In Rattus norvegicus (Rat), this protein is C-type lectin domain family 2 member D6 (Clec2d6).